We begin with the raw amino-acid sequence, 132 residues long: Small ribosomal subunit protein uS8c (132 aa).

It belongs to the universal ribosomal protein uS8 family. Part of the 30S ribosomal subunit.

Its subcellular location is the plastid. The protein localises to the chloroplast. Its function is as follows. One of the primary rRNA binding proteins, it binds directly to 16S rRNA central domain where it helps coordinate assembly of the platform of the 30S subunit. The chain is Small ribosomal subunit protein uS8c (rps8) from Guillardia theta (Cryptophyte).